The sequence spans 145 residues: D-aminoacyl-tRNA deacylase (145 aa).

A Gly-cisPro motif, important for rejection of L-amino acids motif is present at residues 137–138 (GP).

The protein belongs to the DTD family. In terms of assembly, homodimer.

It localises to the cytoplasm. The catalysed reaction is glycyl-tRNA(Ala) + H2O = tRNA(Ala) + glycine + H(+). The enzyme catalyses a D-aminoacyl-tRNA + H2O = a tRNA + a D-alpha-amino acid + H(+). Functionally, an aminoacyl-tRNA editing enzyme that deacylates mischarged D-aminoacyl-tRNAs. Also deacylates mischarged glycyl-tRNA(Ala), protecting cells against glycine mischarging by AlaRS. Acts via tRNA-based rather than protein-based catalysis; rejects L-amino acids rather than detecting D-amino acids in the active site. By recycling D-aminoacyl-tRNA to D-amino acids and free tRNA molecules, this enzyme counteracts the toxicity associated with the formation of D-aminoacyl-tRNA entities in vivo and helps enforce protein L-homochirality. The protein is D-aminoacyl-tRNA deacylase of Lactobacillus acidophilus (strain ATCC 700396 / NCK56 / N2 / NCFM).